A 913-amino-acid chain; its full sequence is DNA polymerase (913 aa).

The interval 182–401 is contains conserved residues essential for 3' -&gt; 5' exonuclease activities; that stretch reads PLIIASWDIE…AYARKDTDLP (220 aa).

Belongs to the DNA polymerase type-B family.

The enzyme catalyses DNA(n) + a 2'-deoxyribonucleoside 5'-triphosphate = DNA(n+1) + diphosphate. In addition to polymerase activity, this DNA polymerase potentially exhibits 3' to 5' exonuclease activity. The polypeptide is DNA polymerase (DPO) (Chlorella (PBCV-NY2A)).